The primary structure comprises 141 residues: Hemoglobin subunit alpha-A (141 aa).

Residues 1–141 form the Globin domain; the sequence is VLSASDKTNV…VAKELTAKYR (141 aa). His58 is a binding site for O2. His87 is a binding site for heme b.

It belongs to the globin family. In terms of assembly, heterotetramer of two alpha chains and two beta chains. In terms of tissue distribution, red blood cells.

Involved in oxygen transport from the lung to the various peripheral tissues. The sequence is that of Hemoglobin subunit alpha-A (HBAA) from Phalacrocorax carbo (Great cormorant).